Reading from the N-terminus, the 748-residue chain is Cytosolic phospholipase A2 (748 aa).

Positions 1 to 178 (MSFIDPYQHI…MKKLLGPKKS (178 aa)) are phospholipid binding. Serine 2 carries the post-translational modification Phosphoserine. The C2 domain maps to 6 to 122 (PYQHIIVEHQ…KVGEKKEVPF (117 aa)). The Ca(2+) site is built by aspartate 40, threonine 41, aspartate 43, asparagine 65, aspartate 93, alanine 94, and asparagine 95. One can recognise a PLA2c domain in the interval 140–739 (SCPDLRFSMA…SNVEARKFFN (600 aa)). Serine 228 (nucleophile) is an active-site residue. Phosphothreonine is present on threonine 268. The interval 427-458 (KHIVSNDSSDSDDEAQGPKGTENEEAEKEYQS) is disordered. A phosphoserine mark is found at serine 434, serine 435, and serine 437. A Phosphoserine; by MAPK modification is found at serine 505. Serine 515 bears the Phosphoserine mark. Lysine 540 is covalently cross-linked (Glycyl lysine isopeptide (Lys-Gly) (interchain with G-Cter in SUMO2)). Aspartate 548 serves as the catalytic Proton acceptor. Lysine 605 is covalently cross-linked (Glycyl lysine isopeptide (Lys-Gly) (interchain with G-Cter in SUMO2)). Serine 726 and serine 728 each carry phosphoserine.

In terms of assembly, interacts with KAT5. In terms of processing, phosphorylated at both Ser-505 and Ser-726 in response to mitogenic stimuli. Expressed in various organs including uterus, kidney, spleen, liver, heart, lung and brain (at protein level).

The protein resides in the cytoplasm. The protein localises to the golgi apparatus membrane. Its subcellular location is the nucleus envelope. It carries out the reaction a 1,2-diacyl-sn-glycero-3-phosphocholine + H2O = a 1-acyl-sn-glycero-3-phosphocholine + a fatty acid + H(+). The catalysed reaction is a 1-O-alkyl-2-acyl-sn-glycero-3-phosphocholine + H2O = a 1-O-alkyl-sn-glycero-3-phosphocholine + a fatty acid + H(+). It catalyses the reaction a 1-acyl-sn-glycero-3-phosphocholine + H2O = sn-glycerol 3-phosphocholine + a fatty acid + H(+). The enzyme catalyses 1-hexadecanoyl-2-(5Z,8Z,11Z,14Z-eicosatetraenoyl)-sn-glycero-3-phosphocholine + H2O = 1-hexadecanoyl-sn-glycero-3-phosphocholine + (5Z,8Z,11Z,14Z)-eicosatetraenoate + H(+). It carries out the reaction 1,2-di-(5Z,8Z,11Z,14Z-eicosatetraenoyl)-sn-glycero-3-phosphocholine + H2O = 1-(5Z,8Z,11Z,14Z-eicosatetraenoyl)-sn-glycero-3-phosphocholine + (5Z,8Z,11Z,14Z)-eicosatetraenoate + H(+). The catalysed reaction is 1-octadecanoyl-2-(5Z,8Z,11Z,14Z-eicosatetraenoyl)-sn-glycero-3-phosphocholine + H2O = 1-octadecanoyl-sn-glycero-3-phosphocholine + (5Z,8Z,11Z,14Z)-eicosatetraenoate + H(+). It catalyses the reaction 1-hexadecanoyl-2-(9Z,12Z-octadecadienoyl)-sn-glycero-3-phosphocholine + H2O = (9Z,12Z)-octadecadienoate + 1-hexadecanoyl-sn-glycero-3-phosphocholine + H(+). The enzyme catalyses 1-octadecanoyl-2-(9Z,12Z,15Z-octadecatrienoyl)-sn-glycero-3-phosphocholine + H2O = (9Z,12Z,15Z)-octadecatrienoate + 1-octadecanoyl-sn-glycero-3-phosphocholine + H(+). It carries out the reaction 1-(5Z,8Z,11Z,14Z-eicosatetraenoyl)-2-hexadecanoyl-sn-glycero-3-phosphocholine + H2O = 1-(5Z,8Z,11Z,14Z-eicosatetraenoyl)-sn-glycero-3-phosphocholine + hexadecanoate + H(+). The catalysed reaction is 1-O-hexadecyl-2-(5Z,8Z,11Z,14Z)-eicosatetraenoyl-sn-glycero-3-phosphocholine + H2O = 1-O-hexadecyl-sn-glycero-3-phosphocholine + (5Z,8Z,11Z,14Z)-eicosatetraenoate + H(+). It catalyses the reaction 1,2-di-(9Z-octadecenoyl)-sn-glycero-3-phospho-(1'-sn-glycerol) + H2O = 1-(9Z-octadecenoyl)-sn-glycero-3-phospho-(1'-sn-glycerol) + (9Z)-octadecenoate + H(+). The enzyme catalyses 1-octadecanoyl-2-(5Z,8Z,11Z,14Z-eicosatetraenoyl)-sn-glycero-3-phosphate + H2O = 1-octadecanoyl-sn-glycero-3-phosphate + (5Z,8Z,11Z,14Z)-eicosatetraenoate + H(+). It carries out the reaction 1-hexadecanoyl-sn-glycero-3-phosphocholine + H2O = sn-glycerol 3-phosphocholine + hexadecanoate + H(+). The catalysed reaction is 2-(prostaglandin E2)-sn-glycero-3-phosphoethanolamine + H2O = sn-glycero-3-phosphoethanolamine + prostaglandin E2 + H(+). It catalyses the reaction 2-[(15S)-hydroxy-(5Z,8Z,11Z,13E)-eicosatetraenoyl]-sn-glycero-3-phosphocholine + H2O = (15S)-hydroxy-(5Z,8Z,11Z,13E)-eicosatetraenoate + sn-glycerol 3-phosphocholine + H(+). The enzyme catalyses 2-[(15R)-hydroxy-(5Z,8Z,11Z,13E)-eicosatetraenoyl]-sn-glycero-3-phosphocholine + H2O = (15R)-hydroxy-(5Z,8Z,11Z,13E)-eicosatetraenoate + sn-glycerol 3-phosphocholine + H(+). It carries out the reaction 2-(prostaglandin E2)-sn-glycero-3-phosphocholine + H2O = prostaglandin E2 + sn-glycerol 3-phosphocholine + H(+). The catalysed reaction is 2-[(11R)-hydroxy-(5Z,8Z,12E,14Z)-eicosatetraenoyl]-sn-glycero-3-phosphocholine + H2O = (11R)-hydroxy-(5Z,8Z,12E,14Z)-eicosatetraenoate + sn-glycerol 3-phosphocholine + H(+). It catalyses the reaction 1-(5Z,8Z,11Z,14Z-eicosatetraenoyl)-2-O-hexadecyl-sn-glycero-3-phosphocholine + H2O = 2-O-hexadecyl-sn-glycero-3-phosphocholine + (5Z,8Z,11Z,14Z)-eicosatetraenoate + H(+). The enzyme catalyses 1-octadecanoyl-2-(5Z,8Z,11Z,14Z-eicosatetraenoyl)-sn-glycero-3-phosphocholine + glycerol = 1-(5Z,8Z,11Z,14Z-eicosatetraenoyl)-glycerol + 1-octadecanoyl-sn-glycero-3-phosphocholine. It carries out the reaction 1-octadecanoyl-2-(9Z,12Z,15Z-octadecatrienoyl)-sn-glycero-3-phosphocholine + glycerol = 1-(9Z,12Z,15Z-octadecatrienoyl)-glycerol + 1-octadecanoyl-sn-glycero-3-phosphocholine. The protein operates within membrane lipid metabolism; glycerophospholipid metabolism. Its pathway is lipid metabolism; arachidonate metabolism. It participates in lipid metabolism; prostaglandin biosynthesis. It functions in the pathway lipid metabolism; leukotriene B4 biosynthesis. With respect to regulation, activated by cytosolic calcium, which is necessary for binding to membrane lipids. Activated by phosphorylation in response to mitogenic stimuli. Stimulated by agonists such as ATP and thrombin. Has primarily calcium-dependent phospholipase and lysophospholipase activities, with a major role in membrane lipid remodeling and biosynthesis of lipid mediators of the inflammatory response. Plays an important role in embryo implantation and parturition through its ability to trigger prostanoid production. Preferentially hydrolyzes the ester bond of the fatty acyl group attached at sn-2 position of phospholipids (phospholipase A2 activity). Selectively hydrolyzes sn-2 arachidonoyl group from membrane phospholipids, providing the precursor for eicosanoid biosynthesis via the cyclooxygenase pathway. In an alternative pathway of eicosanoid biosynthesis, hydrolyzes sn-2 fatty acyl chain of eicosanoid lysophopholipids to release free bioactive eicosanoids. Hydrolyzes the ester bond of the fatty acyl group attached at sn-1 position of phospholipids (phospholipase A1 activity) only if an ether linkage rather than an ester linkage is present at the sn-2 position. This hydrolysis is not stereospecific. Has calcium-independent phospholipase A2 and lysophospholipase activities in the presence of phosphoinositides. Has O-acyltransferase activity. Catalyzes the transfer of fatty acyl chains from phospholipids to a primary hydroxyl group of glycerol (sn-1 or sn-3), potentially contributing to monoacylglycerol synthesis. The polypeptide is Cytosolic phospholipase A2 (Pla2g4a) (Mus musculus (Mouse)).